A 249-amino-acid chain; its full sequence is MLRAKVRRIALANQKGGVGKTTTAINLAAYLARLGKRVLLVDLDPQGNATSGLGVRAERGVYHLLQGEPLEGLVHPVDGFHLLPATPDLVGATVELAGAPTALREALRDEGYDLVLLDAPPSLSPLTLNALAAAEGVVVPVQAEYYALEGVAGLLATLEEVRAGLNPRLRLLGILVTMYDGRTLLAQQVEAQLRAHFGEKVFWTVIPRNVRLAEAPSFGKTIAQHAPTSPGAHAYRRLAEEVMARVQEA.

K15, G16, G17, V18, G19, K20, T21, T22, P207, and N209 together coordinate ATP. Residue G17 coordinates ADP. ADP is bound by residues G19, K20, T21, T22, P207, and N209. Residue T21 coordinates Mg(2+).

The protein belongs to the ParA family. As to quaternary structure, monomer in the absence of nucleotides or presence of ADP, in the presence of ATP is found in a monomer-dimer equilibrium. ATP-binding is required for DNA-binding. Probably interacts with Spo0J.

The enzyme catalyses ATP + H2O = ADP + phosphate + H(+). ATPase activity is stimulated 10-fold in the presence of Spo0J and parS DNA (a plasmid centromere-like site or plasmid DNA itself). The first 20 residues of Spo0J stimulate its ATPase activity by 8%. Functionally, ATPase probably involved in chromosome partitioning. Cooperatively binds dsDNA, forming nucleoprotein filaments in a strictly ATP-dependent fashion. Can also bind ssDNA with lower affinity. This chain is Chromosome-partitioning ATPase Soj, found in Thermus thermophilus (strain ATCC BAA-163 / DSM 7039 / HB27).